The primary structure comprises 189 residues: Threonylcarbamoyl-AMP synthase (189 aa).

Positions 7–189 (NFTVKGLTEQ…DAITGKIIRK (183 aa)) constitute a YrdC-like domain.

The protein belongs to the SUA5 family. TsaC subfamily.

It localises to the cytoplasm. It catalyses the reaction L-threonine + hydrogencarbonate + ATP = L-threonylcarbamoyladenylate + diphosphate + H2O. Its function is as follows. Required for the formation of a threonylcarbamoyl group on adenosine at position 37 (t(6)A37) in tRNAs that read codons beginning with adenine. Catalyzes the conversion of L-threonine, HCO(3)(-)/CO(2) and ATP to give threonylcarbamoyl-AMP (TC-AMP) as the acyladenylate intermediate, with the release of diphosphate. In Blochmanniella floridana, this protein is Threonylcarbamoyl-AMP synthase.